A 210-amino-acid polypeptide reads, in one-letter code: Frataxin, mitochondrial (210 aa).

The transit peptide at 1–41 directs the protein to the mitochondrion; sequence MWTLGRRAVAGLLASPSPAQAQTLTRVPRPAELAPLCGRRG.

The protein belongs to the frataxin family. As to quaternary structure, component of the mitochondrial core iron-sulfur cluster (ISC) complex composed of NFS1, LYRM4, NDUFAB1, ISCU, FXN, and FDX2; this complex is a heterohexamer containing two copies of each monomer. Homodimer. Monomer (probable predominant form). Oligomer. Monomers and polymeric aggregates of &gt;1 MDa have been isolated from mitochondria. A small fraction of heterologous overexpressed recombinant frataxin forms high-molecular weight aggregates that incorporate iron. Interacts with LYRM4. Interacts (via ferrous form) with ISCU; the interaction is possible when both are bound to the dimeric form of the cysteine desulfurase complex (NFS1:LYRM4) and the interaction enhances FXN interaction to the dimeric form of the cysteine desulfurase complex (NFS1:LYRM4). Interacts with FECH; one iron-bound FXN monomer seems to interact with a FECH homodimer. Interacts with SDHA and SDHB. Interacts with ACO2; the interaction is dependent on citrate. Interacts with HSPA9. Interacts with ACO1. Interacts with ISCU (cytoplasmic form). In terms of processing, processed in two steps by mitochondrial processing peptidase (MPP). MPP first cleaves the precursor to intermediate form and subsequently converts the intermediate to yield frataxin mature form (frataxin(81-210)) which is the predominant form. The additional forms, frataxin(56-210) and frataxin(78-210), seem to be produced when the normal maturation process is impaired; their physiological relevance is unsure. Expressed in the heart, peripheral blood lymphocytes and dermal fibroblasts.

The protein resides in the mitochondrion. Its subcellular location is the cytoplasm. The protein localises to the cytosol. The enzyme catalyses 4 Fe(2+) + O2 + 4 H(+) = 4 Fe(3+) + 2 H2O. Its function is as follows. Functions as an activator of persulfide transfer to the scaffoding protein ISCU as component of the core iron-sulfur cluster (ISC) assembly complex and participates to the [2Fe-2S] cluster assembly. Accelerates sulfur transfer from NFS1 persulfide intermediate to ISCU and to small thiols such as L-cysteine and glutathione leading to persulfuration of these thiols and ultimately sulfide release. Binds ferrous ion and is released from FXN upon the addition of both L-cysteine and reduced FDX2 during [2Fe-2S] cluster assembly. The core iron-sulfur cluster (ISC) assembly complex is involved in the de novo synthesis of a [2Fe-2S] cluster, the first step of the mitochondrial iron-sulfur protein biogenesis. This process is initiated by the cysteine desulfurase complex (NFS1:LYRM4:NDUFAB1) that produces persulfide which is delivered on the scaffold protein ISCU in a FXN-dependent manner. Then this complex is stabilized by FDX2 which provides reducing equivalents to accomplish the [2Fe-2S] cluster assembly. Finally, the [2Fe-2S] cluster is transferred from ISCU to chaperone proteins, including HSCB, HSPA9 and GLRX5. May play a role in the protection against iron-catalyzed oxidative stress through its ability to catalyze the oxidation of Fe(2+) to Fe(3+); the oligomeric form but not the monomeric form has in vitro ferroxidase activity. May be able to store large amounts of iron in the form of a ferrihydrite mineral by oligomerization; however, the physiological relevance is unsure as reports are conflicting and the function has only been shown using heterologous overexpression systems. May function as an iron chaperone protein that protects the aconitase [4Fe-4S]2+ cluster from disassembly and promotes enzyme reactivation. May play a role as a high affinity iron binding partner for FECH that is capable of both delivering iron to ferrochelatase and mediating the terminal step in mitochondrial heme biosynthesis. Modulates the RNA-binding activity of ACO1. May be involved in the cytoplasmic iron-sulfur protein biogenesis. May contribute to oxidative stress resistance and overall cell survival. The protein is Frataxin, mitochondrial of Homo sapiens (Human).